Here is a 391-residue protein sequence, read N- to C-terminus: Ammonium transporter Amt1 (391 aa).

Transmembrane regions (helical) follow at residues 12–32 (VFFFMWAASLIFFMKAGFIAL), 51–71 (LDLAAVFIAYLFIGYGISYGF), 88–108 (AWWMKMVMFAAAAVTIITGGV), 112–132 (IKILPYFIGALIVGGILYPIV), 152–172 (AGSGAVHLFGGLVGLMAAYVL), 192–212 (IPIAVLGAFILAFGWYGFNIG), 223–243 (LASVAMATTMALAGGIIGGAL), 261–281 (VAVCSGVDLFTPIGAFIVGLL), 305–325 (IGPVHAMSGLIGVICAGIPFL), and 338–358 (GQIIGAIVIALIAIVGGLIIY).

It belongs to the ammonia transporter channel (TC 1.A.11.2) family. Homotrimer. Interacts and forms a complex with GlnK1.

It is found in the cell membrane. Its activity is regulated as follows. Activity is regulated by the nitrogen regulatory protein GlnK1 via direct interaction. Formation of the GlnK1/Amt1 complex is decreased in the presence of Mg-ATP or 2-oxoglutarate. The presence of both effectors abolishes the formation of the complex. Functionally, involved in the uptake of ammonium/ammonia (NH(4)(+)/NH(3)). Transport is electrogenic. The polypeptide is Ammonium transporter Amt1 (Methanocaldococcus jannaschii (strain ATCC 43067 / DSM 2661 / JAL-1 / JCM 10045 / NBRC 100440) (Methanococcus jannaschii)).